A 363-amino-acid polypeptide reads, in one-letter code: Lovastatin nonaketide synthase, enoyl reductase component lovC (363 aa).

NADP(+) contacts are provided by residues 51-54, 174-177, 197-200, Tyr215, 262-263, Thr280, and 351-352; these read SDTK, STAT, SPHN, LN, and LS. A lovB-binding region spans residues 226-272; sequence TYTKNNLRYALDCITNVESTTFCFAAIGRAGGHYVSLNPFPEHAATR.

Belongs to the zinc-containing alcohol dehydrogenase family. Each MAT domain from the lovB homodimer binds one lovC molecule to form the final active lovB-lovC megasynthase complex.

It carries out the reaction holo-[lovastatin nonaketide synthase] + 9 malonyl-CoA + S-adenosyl-L-methionine + 11 NADPH + 19 H(+) = dihydromonacolin L-[lovastatin nonaketide synthase] + S-adenosyl-L-homocysteine + 9 CO2 + 11 NADP(+) + 9 CoA + 6 H2O. Its pathway is polyketide biosynthesis; lovastatin biosynthesis. Its function is as follows. Trans-enoyl reductase; part of the gene cluster that mediates the biosynthesis of lovastatin (also known as mevinolin, mevacor or monacolin K), a hypolipidemic inhibitor of (3S)-hydroxymethylglutaryl-coenzyme A (HMG-CoA) reductase (HMGR). The first step in the biosynthesis of lovastatin is the production of dihydromonacolin L acid (DML) by the lovastatin nonaketide synthase lovB and the trans-acting enoyl reductase lovC (called the lovB-lovC megasynthase complex) via condensation of one acetyl-CoA unit and 8 malonyl-CoA units. The formation of the LovB/C complex is essential for the integrity of the catalytic chamber to the complete total synthesis of DML acid. Dihydromonacolin L acid is released from lovB by the thioesterase lovG. Next, dihydromonacolin L acid is oxidized by the dihydromonacolin L monooxygenase lovA twice to form monacolin J acid. The 2-methylbutyrate moiety of lovastatin is synthesized by the lovastatin diketide synthase lovF via condensation of one acetyl-CoA unit and one malonyl-CoA unit. Finally, the covalent attachment of this moiety to monacolin J acid is catalyzed by the transesterase lovD to yield lovastatin. LovD has broad substrate specificity and can also convert monacolin J to simvastatin using alpha-dimethylbutanoyl-S-methyl-3-mercaptopropionate (DMB-S-MMP) as the thioester acyl donor, and can also catalyze the reverse reaction and function as hydrolase in vitro. LovD has much higher activity with LovF-bound 2-methylbutanoate than with free diketide substrates. This Aspergillus terreus protein is Lovastatin nonaketide synthase, enoyl reductase component lovC.